Consider the following 78-residue polypeptide: Acyl carrier protein (78 aa).

One can recognise a Carrier domain in the interval 1-77 (MALIDEIKDV…DAAKYIEEHK (77 aa)). Ser-37 is subject to O-(pantetheine 4'-phosphoryl)serine.

It belongs to the acyl carrier protein (ACP) family. In terms of processing, 4'-phosphopantetheine is transferred from CoA to a specific serine of apo-ACP by AcpS. This modification is essential for activity because fatty acids are bound in thioester linkage to the sulfhydryl of the prosthetic group.

It localises to the secreted. It participates in lipid metabolism; fatty acid biosynthesis. Its function is as follows. Carrier of the growing fatty acid chain in fatty acid biosynthesis. Has hemolytic activity forming pores approximately 1 nm in diameter into erythrocytes. Is able to induce murine colonic lesions and to disrupt the integrity of epithelial cell monolayers. This chain is Acyl carrier protein (acpP), found in Brachyspira hyodysenteriae (Treponema hyodysenteriae).